Reading from the N-terminus, the 315-residue chain is tRNA uridine(34) hydroxylase (315 aa).

A Rhodanese domain is found at 145-235 (MKNDFILVDM…GIIEYVNFIK (91 aa)). The active-site Cysteine persulfide intermediate is cysteine 199.

Belongs to the TrhO family.

The enzyme catalyses uridine(34) in tRNA + AH2 + O2 = 5-hydroxyuridine(34) in tRNA + A + H2O. In terms of biological role, catalyzes oxygen-dependent 5-hydroxyuridine (ho5U) modification at position 34 in tRNAs. The sequence is that of tRNA uridine(34) hydroxylase from Wigglesworthia glossinidia brevipalpis.